The primary structure comprises 355 residues: F-box protein At1g31080 (355 aa).

The region spanning Gly-4 to Leu-49 is the F-box domain. Polar residues predominate over residues Ala-306 to Ser-320. Residues Ala-306–Gln-333 are disordered. A compositionally biased stretch (basic and acidic residues) spans Ser-321–Gln-333.

In Arabidopsis thaliana (Mouse-ear cress), this protein is F-box protein At1g31080.